The chain runs to 113 residues: MQAKAVARTVRIAPRKARLVIDLIRGKEVGEAVAILRHTPKAASPIIEKVLKSAVANAEHNYDMDVNKLVITEAYVDEGPTLKRFRPRAMGRASAINKRTSHITIVVSEKKEG.

It belongs to the universal ribosomal protein uL22 family. Part of the 50S ribosomal subunit.

Functionally, this protein binds specifically to 23S rRNA; its binding is stimulated by other ribosomal proteins, e.g. L4, L17, and L20. It is important during the early stages of 50S assembly. It makes multiple contacts with different domains of the 23S rRNA in the assembled 50S subunit and ribosome. The globular domain of the protein is located near the polypeptide exit tunnel on the outside of the subunit, while an extended beta-hairpin is found that lines the wall of the exit tunnel in the center of the 70S ribosome. This Geobacillus sp. (strain WCH70) protein is Large ribosomal subunit protein uL22.